The sequence spans 283 residues: tRNA (guanine-N(1)-)-methyltransferase (283 aa).

S-adenosyl-L-methionine is bound by residues Gly-113 and 133 to 138 (IGDYVL).

The protein belongs to the RNA methyltransferase TrmD family. Homodimer.

The protein resides in the cytoplasm. The enzyme catalyses guanosine(37) in tRNA + S-adenosyl-L-methionine = N(1)-methylguanosine(37) in tRNA + S-adenosyl-L-homocysteine + H(+). Specifically methylates guanosine-37 in various tRNAs. The protein is tRNA (guanine-N(1)-)-methyltransferase of Parafrankia sp. (strain EAN1pec).